The sequence spans 257 residues: Adenosylcobinamide-GDP ribazoletransferase (257 aa).

7 consecutive transmembrane segments (helical) span residues Ile30 to Ile50, Met52 to Thr72, Ser109 to Ser129, Ser132 to Tyr152, Leu175 to Leu195, Asn198 to Phe218, and Gly237 to Phe257.

This sequence belongs to the CobS family. It depends on Mg(2+) as a cofactor.

Its subcellular location is the cell membrane. The enzyme catalyses alpha-ribazole + adenosylcob(III)inamide-GDP = adenosylcob(III)alamin + GMP + H(+). The catalysed reaction is alpha-ribazole 5'-phosphate + adenosylcob(III)inamide-GDP = adenosylcob(III)alamin 5'-phosphate + GMP + H(+). It participates in cofactor biosynthesis; adenosylcobalamin biosynthesis; adenosylcobalamin from cob(II)yrinate a,c-diamide: step 7/7. In terms of biological role, joins adenosylcobinamide-GDP and alpha-ribazole to generate adenosylcobalamin (Ado-cobalamin). Also synthesizes adenosylcobalamin 5'-phosphate from adenosylcobinamide-GDP and alpha-ribazole 5'-phosphate. The chain is Adenosylcobinamide-GDP ribazoletransferase from Clostridioides difficile (strain 630) (Peptoclostridium difficile).